The primary structure comprises 88 residues: ATPase inhibitor mai-1, mitochondrial (88 aa).

A compositionally biased stretch (gly residues) spans 1–18 (MSGSGSGSGAGHGGGSGG). Positions 1–41 (MSGSGSGSGAGHGGGSGGSIREAGGSLGMMGATREEEYFRR) are disordered. Residues 39–87 (FRRQQKDQLDNLKKKLEADMTQSQQEIRDHEKVLEQHQQRLKEIEKGHG) are a coiled coil.

It belongs to the ATPase inhibitor family. In terms of processing, does not seem to include a transit peptide.

Its subcellular location is the mitochondrion. Thought to be a regulatory component of the ATP-synthesizing complex in the mitochondria. In Caenorhabditis elegans, this protein is ATPase inhibitor mai-1, mitochondrial (mai-1).